Reading from the N-terminus, the 664-residue chain is DNA ligase (664 aa).

Residues 31–35 (DSTYD), 80–81 (SL), and Glu110 each bind NAD(+). Lys112 serves as the catalytic N6-AMP-lysine intermediate. Residues Arg133, Glu167, Lys282, and Lys306 each contribute to the NAD(+) site. Residues Cys400, Cys403, Cys418, and Cys423 each coordinate Zn(2+). In terms of domain architecture, BRCT spans 583 to 664 (QSNAPLAGKT…LLEELAKYEG (82 aa)).

It belongs to the NAD-dependent DNA ligase family. LigA subfamily. Requires Mg(2+) as cofactor. The cofactor is Mn(2+).

The catalysed reaction is NAD(+) + (deoxyribonucleotide)n-3'-hydroxyl + 5'-phospho-(deoxyribonucleotide)m = (deoxyribonucleotide)n+m + AMP + beta-nicotinamide D-nucleotide.. Its function is as follows. DNA ligase that catalyzes the formation of phosphodiester linkages between 5'-phosphoryl and 3'-hydroxyl groups in double-stranded DNA using NAD as a coenzyme and as the energy source for the reaction. It is essential for DNA replication and repair of damaged DNA. This chain is DNA ligase, found in Exiguobacterium sibiricum (strain DSM 17290 / CCUG 55495 / CIP 109462 / JCM 13490 / 255-15).